Here is a 132-residue protein sequence, read N- to C-terminus: Ribonuclease P protein component 2 (132 aa).

The protein belongs to the eukaryotic/archaeal RNase P protein component 2 family. As to quaternary structure, consists of a catalytic RNA component and at least 4-5 protein subunits.

Its subcellular location is the cytoplasm. The catalysed reaction is Endonucleolytic cleavage of RNA, removing 5'-extranucleotides from tRNA precursor.. Its function is as follows. Part of ribonuclease P, a protein complex that generates mature tRNA molecules by cleaving their 5'-ends. The protein is Ribonuclease P protein component 2 of Methanosarcina acetivorans (strain ATCC 35395 / DSM 2834 / JCM 12185 / C2A).